The sequence spans 120 residues: NAD(P)H-quinone oxidoreductase subunit 3, chloroplastic (120 aa).

3 helical membrane passes run 9 to 29 (IFWAFLIISSLIPILAFLISG), 64 to 84 (MFALVFVVFDVETVFLYPWAM), and 88 to 108 (VLGVSVFIEALIFVLIPIIGS).

This sequence belongs to the complex I subunit 3 family. As to quaternary structure, NDH is composed of at least 16 different subunits, 5 of which are encoded in the nucleus.

It localises to the plastid. Its subcellular location is the chloroplast thylakoid membrane. It carries out the reaction a plastoquinone + NADH + (n+1) H(+)(in) = a plastoquinol + NAD(+) + n H(+)(out). It catalyses the reaction a plastoquinone + NADPH + (n+1) H(+)(in) = a plastoquinol + NADP(+) + n H(+)(out). NDH shuttles electrons from NAD(P)H:plastoquinone, via FMN and iron-sulfur (Fe-S) centers, to quinones in the photosynthetic chain and possibly in a chloroplast respiratory chain. The immediate electron acceptor for the enzyme in this species is believed to be plastoquinone. Couples the redox reaction to proton translocation, and thus conserves the redox energy in a proton gradient. In Drimys granadensis, this protein is NAD(P)H-quinone oxidoreductase subunit 3, chloroplastic.